Here is a 396-residue protein sequence, read N- to C-terminus: Elongation factor Tu-B (396 aa).

In terms of domain architecture, tr-type G spans 10–206; sequence KLHVNVGTIG…ALDTFIPDPT (197 aa). The segment at 19-26 is G1; it reads GHVDHGKT. Position 19 to 26 (19 to 26) interacts with GTP; sequence GHVDHGKT. Mg(2+) is bound at residue T26. The G2 stretch occupies residues 60-64; sequence GITIS. Residues 81 to 84 are G3; the sequence is DCPG. GTP contacts are provided by residues 81-85 and 136-139; these read DCPGH and NKAD. The tract at residues 136-139 is G4; sequence NKAD. The interval 174-176 is G5; that stretch reads SAR.

This sequence belongs to the TRAFAC class translation factor GTPase superfamily. Classic translation factor GTPase family. EF-Tu/EF-1A subfamily. Monomer.

It is found in the cytoplasm. It carries out the reaction GTP + H2O = GDP + phosphate + H(+). Its function is as follows. GTP hydrolase that promotes the GTP-dependent binding of aminoacyl-tRNA to the A-site of ribosomes during protein biosynthesis. This is Elongation factor Tu-B from Xanthomonas campestris pv. campestris (strain ATCC 33913 / DSM 3586 / NCPPB 528 / LMG 568 / P 25).